The following is a 260-amino-acid chain: Proteasome subunit alpha (260 aa).

The disordered stretch occupies residues 241-260 (VEAEEVPEKEEDYSELDSNY). Positions 242 to 260 (EAEEVPEKEEDYSELDSNY) are enriched in acidic residues.

The protein belongs to the peptidase T1A family. As to quaternary structure, the 20S proteasome core is composed of 14 alpha and 14 beta subunits that assemble into four stacked heptameric rings, resulting in a barrel-shaped structure. The two inner rings, each composed of seven catalytic beta subunits, are sandwiched by two outer rings, each composed of seven alpha subunits. The catalytic chamber with the active sites is on the inside of the barrel. Has a gated structure, the ends of the cylinder being occluded by the N-termini of the alpha-subunits. Is capped at one or both ends by the proteasome regulatory ATPase, PAN.

Its subcellular location is the cytoplasm. With respect to regulation, the formation of the proteasomal ATPase PAN-20S proteasome complex, via the docking of the C-termini of PAN into the intersubunit pockets in the alpha-rings, triggers opening of the gate for substrate entry. Interconversion between the open-gate and close-gate conformations leads to a dynamic regulation of the 20S proteasome proteolysis activity. Component of the proteasome core, a large protease complex with broad specificity involved in protein degradation. This is Proteasome subunit alpha from Thermococcus sibiricus (strain DSM 12597 / MM 739).